The primary structure comprises 499 residues: Tetrathionate hydrolase (499 aa).

Residues 1–32 (MPSIVRNHGPHNKILLSALLLALFGWVPLASA) form the signal peptide.

It belongs to the tetrathionate hydrolase family. As to quaternary structure, homodimer.

The protein localises to the cell membrane. It catalyses the reaction tetrathionate + H2O = sulfur + thiosulfate + sulfate + H(+). Catalyzes the hydrolysis of tetrathionate to generate elemental sulfur, thiosulfate and sulfate. The chain is Tetrathionate hydrolase from Acidithiobacillus ferrooxidans (strain ATCC 23270 / DSM 14882 / CIP 104768 / NCIMB 8455) (Ferrobacillus ferrooxidans (strain ATCC 23270)).